Consider the following 428-residue polypeptide: Tyrosine--tRNA ligase (428 aa).

Residue Y36 coordinates L-tyrosine. The short motif at 41–50 is the 'HIGH' region element; that stretch reads PTARSLHIGS. L-tyrosine-binding residues include Y169 and Q173. The 'KMSKS' region motif lies at 229-233; it reads KMGKT. K232 serves as a coordination point for ATP. The 67-residue stretch at 361–427 folds into the S4 RNA-binding domain; it reads IPAYEIMHEC…GKKKYMIIKV (67 aa).

The protein belongs to the class-I aminoacyl-tRNA synthetase family. TyrS type 1 subfamily. As to quaternary structure, homodimer.

Its subcellular location is the cytoplasm. It carries out the reaction tRNA(Tyr) + L-tyrosine + ATP = L-tyrosyl-tRNA(Tyr) + AMP + diphosphate + H(+). Functionally, catalyzes the attachment of tyrosine to tRNA(Tyr) in a two-step reaction: tyrosine is first activated by ATP to form Tyr-AMP and then transferred to the acceptor end of tRNA(Tyr). The chain is Tyrosine--tRNA ligase from Syntrophus aciditrophicus (strain SB).